A 257-amino-acid polypeptide reads, in one-letter code: tRNA pseudouridine synthase A (257 aa).

Catalysis depends on aspartate 53, which acts as the Nucleophile. Tyrosine 111 is a substrate binding site.

Belongs to the tRNA pseudouridine synthase TruA family. In terms of assembly, homodimer.

The catalysed reaction is uridine(38/39/40) in tRNA = pseudouridine(38/39/40) in tRNA. In terms of biological role, formation of pseudouridine at positions 38, 39 and 40 in the anticodon stem and loop of transfer RNAs. This Xanthomonas axonopodis pv. citri (strain 306) protein is tRNA pseudouridine synthase A.